Consider the following 217-residue polypeptide: Probable GTP-binding protein EngB (217 aa).

In terms of domain architecture, EngB-type G spans 44-217; it reads DRIEVCFAGR…TLRTIVATLG (174 aa). Residues 52–59, 79–83, 97–100, 164–167, and 198–200 each bind GTP; these read GRSNVGKS, GRTQE, DLPG, TKAD, and TSS. Residues Ser59 and Thr81 each contribute to the Mg(2+) site.

This sequence belongs to the TRAFAC class TrmE-Era-EngA-EngB-Septin-like GTPase superfamily. EngB GTPase family. It depends on Mg(2+) as a cofactor.

Functionally, necessary for normal cell division and for the maintenance of normal septation. The protein is Probable GTP-binding protein EngB of Cereibacter sphaeroides (strain ATCC 17023 / DSM 158 / JCM 6121 / CCUG 31486 / LMG 2827 / NBRC 12203 / NCIMB 8253 / ATH 2.4.1.) (Rhodobacter sphaeroides).